Reading from the N-terminus, the 262-residue chain is Small ribosomal subunit protein eS1 (262 aa).

Belongs to the eukaryotic ribosomal protein eS1 family. Component of the small ribosomal subunit. Mature ribosomes consist of a small (40S) and a large (60S) subunit. The 40S subunit contains about 33 different proteins and 1 molecule of RNA (18S). The 60S subunit contains about 49 different proteins and 3 molecules of RNA (25S, 5.8S and 5S).

The protein localises to the cytoplasm. This chain is Small ribosomal subunit protein eS1, found in Brassica campestris (Field mustard).